The chain runs to 320 residues: Aminoacyl tRNA synthase complex-interacting multifunctional protein 2 (320 aa).

A Phosphoserine modification is found at serine 36. The tract at residues 82–162 (TPDADLDVTN…HTHSSVKNVP (81 aa)) is interaction with PRKN. Positions 162 to 225 (PENLVKCFGE…FLFSLFGQKH (64 aa)) are interaction with TP53. The GST C-terminal domain maps to 220 to 317 (LFGQKHNAVT…NLAPFSTALQ (98 aa)).

As to quaternary structure, part of the multisynthetase complex (MSC), a multisubunit complex that groups tRNA ligases for Arg (RARS1), Asp (DARS1), Gln (QARS1), Ile (IARS1), Leu (LARS1), Lys (KARS1), Met (MARS1) the bifunctional ligase for Glu and Pro (EPRS1) and the auxiliary subunits AIMP1/p43, AIMP2/p38 and EEF1E1/p18. Interacts (via N-terminus) with KARS1. Interacts with EPRS1. Forms a linear complex that contains MARS1, EEF1E1, EPRS1 and AIMP2 that is at the core of the multisubunit complex. Binds FUBP1 (via C-terminus). Interacts in both its unphosphorylated and phosphorylated forms with p53/TP53 (via N-terminus) in the nucleus following UV irradiation. Interacts (via N-terminus) with PRKN/parkin (via first RING-type domain). Interacts with TARS3. Phosphorylated on serine residues in response to UV irradiation. In terms of processing, ubiquitinated by PRKN, leading to its degradation by the proteasome.

The protein resides in the cytoplasm. It is found in the cytosol. Its subcellular location is the nucleus. Functionally, required for assembly and stability of the aminoacyl-tRNA synthase complex. Mediates ubiquitination and degradation of FUBP1, a transcriptional activator of MYC, leading to MYC down-regulation which is required for aveolar type II cell differentiation. Blocks MDM2-mediated ubiquitination and degradation of p53/TP53. Functions as a proapoptotic factor. The protein is Aminoacyl tRNA synthase complex-interacting multifunctional protein 2 (Aimp2) of Mus musculus (Mouse).